A 302-amino-acid polypeptide reads, in one-letter code: Oxygen-dependent coproporphyrinogen-III oxidase (302 aa).

Ser94 lines the substrate pocket. A divalent metal cation contacts are provided by His98 and His108. His108 acts as the Proton donor in catalysis. Residue 110–112 (NVR) coordinates substrate. A divalent metal cation is bound by residues His147 and His177. The segment at 242–277 (YVEFNLVWDRGTLFGLQTGGRTESILMSMPPLVRWE) is important for dimerization. 260–262 (GGR) contributes to the substrate binding site.

This sequence belongs to the aerobic coproporphyrinogen-III oxidase family. Homodimer. It depends on a divalent metal cation as a cofactor.

Its subcellular location is the cytoplasm. The enzyme catalyses coproporphyrinogen III + O2 + 2 H(+) = protoporphyrinogen IX + 2 CO2 + 2 H2O. The protein operates within porphyrin-containing compound metabolism; protoporphyrin-IX biosynthesis; protoporphyrinogen-IX from coproporphyrinogen-III (O2 route): step 1/1. Involved in the heme biosynthesis. Catalyzes the aerobic oxidative decarboxylation of propionate groups of rings A and B of coproporphyrinogen-III to yield the vinyl groups in protoporphyrinogen-IX. This chain is Oxygen-dependent coproporphyrinogen-III oxidase, found in Erwinia tasmaniensis (strain DSM 17950 / CFBP 7177 / CIP 109463 / NCPPB 4357 / Et1/99).